The primary structure comprises 572 residues: Urease subunit alpha (572 aa).

In terms of domain architecture, Urease spans Ala134–Gly572. Ni(2+)-binding residues include His139, His141, and Lys222. N6-carboxylysine is present on Lys222. Position 224 (His224) interacts with substrate. Ni(2+) contacts are provided by His251 and His277. His325 acts as the Proton donor in catalysis. Asp365 provides a ligand contact to Ni(2+).

Belongs to the metallo-dependent hydrolases superfamily. Urease alpha subunit family. In terms of assembly, heterotrimer of UreA (gamma), UreB (beta) and UreC (alpha) subunits. Three heterotrimers associate to form the active enzyme. Ni cation is required as a cofactor. Carboxylation allows a single lysine to coordinate two nickel ions.

The protein localises to the cytoplasm. The catalysed reaction is urea + 2 H2O + H(+) = hydrogencarbonate + 2 NH4(+). It participates in nitrogen metabolism; urea degradation; CO(2) and NH(3) from urea (urease route): step 1/1. The sequence is that of Urease subunit alpha from Yersinia enterocolitica serotype O:8 / biotype 1B (strain NCTC 13174 / 8081).